Consider the following 134-residue polypeptide: uncharacterized protein (134 aa).

3 helical membrane passes run 8-28 (FTSLMLTCANIMLQMYFTVMY), 54-74 (GFQAFSALLLLLSGAWITFLL), and 113-133 (LACFAVFFFVYLFLFVSRLVD).

This sequence belongs to the cornichon family.

The protein resides in the endoplasmic reticulum membrane. This is an uncharacterized protein from Schizosaccharomyces pombe (strain 972 / ATCC 24843) (Fission yeast).